A 261-amino-acid chain; its full sequence is Indole-3-glycerol phosphate synthase (261 aa).

The protein belongs to the TrpC family.

It catalyses the reaction 1-(2-carboxyphenylamino)-1-deoxy-D-ribulose 5-phosphate + H(+) = (1S,2R)-1-C-(indol-3-yl)glycerol 3-phosphate + CO2 + H2O. It functions in the pathway amino-acid biosynthesis; L-tryptophan biosynthesis; L-tryptophan from chorismate: step 4/5. This is Indole-3-glycerol phosphate synthase from Campylobacter curvus (strain 525.92).